The chain runs to 249 residues: DNA polymerase sliding clamp 1 (249 aa).

Belongs to the PCNA family. As to quaternary structure, homotrimer. The subunits circularize to form a toroid; DNA passes through its center. Replication factor C (RFC) is required to load the toroid on the DNA. Interacts with TIP.

Its activity is regulated as follows. Inhibited by interaction with the PCNA inhibitor TIP. Sliding clamp subunit that acts as a moving platform for DNA processing. Responsible for tethering the catalytic subunit of DNA polymerase and other proteins to DNA during high-speed replication. The chain is DNA polymerase sliding clamp 1 from Thermococcus kodakarensis (strain ATCC BAA-918 / JCM 12380 / KOD1) (Pyrococcus kodakaraensis (strain KOD1)).